A 654-amino-acid chain; its full sequence is Phosphate transport system permease protein PstA homolog (654 aa).

A run of 12 helical transmembrane segments spans residues 22–42 (LAFL…TEAT), 64–84 (AGIW…LIIA), 113–133 (ILSG…LSIF), 143–163 (LSLL…VISL), 266–286 (VLYI…FFAI), 303–323 (ISNF…ALFV), 368–388 (ELIC…FVFI), 417–437 (LVII…IAIW), 453–473 (FVID…GLSF), 486–506 (NGTS…LFLI), 535–555 (IFKI…ILSI), and 613–633 (VVFL…LFLL). The 216-residue stretch at 70 to 285 (LLVSFIVSIG…ILVSLLNFFA (216 aa)) folds into the ABC transmembrane type-1 1 domain. Residues 413-623 (LVNTLVIILI…VFLILLIFFS (211 aa)) enclose the ABC transmembrane type-1 2 domain.

Belongs to the binding-protein-dependent transport system permease family. CysTW subfamily.

The protein resides in the cell membrane. Functionally, could be part of a binding-protein-dependent transport system for phosphate; probably responsible for the translocation of the substrate across the membrane. This chain is Phosphate transport system permease protein PstA homolog (pstA), found in Mycoplasma genitalium (strain ATCC 33530 / DSM 19775 / NCTC 10195 / G37) (Mycoplasmoides genitalium).